A 311-amino-acid chain; its full sequence is Ornithine carbamoyltransferase (311 aa).

Residues 54–57 (STRT), Gln-81, Arg-105, and 132–135 (HPCQ) each bind carbamoyl phosphate. L-ornithine-binding positions include Asn-164, Asp-228, and 232-233 (SM). Residues 268–269 (CL) and Arg-296 contribute to the carbamoyl phosphate site.

It belongs to the aspartate/ornithine carbamoyltransferase superfamily. OTCase family.

Its subcellular location is the cytoplasm. The catalysed reaction is carbamoyl phosphate + L-ornithine = L-citrulline + phosphate + H(+). It functions in the pathway amino-acid biosynthesis; L-arginine biosynthesis; L-arginine from L-ornithine and carbamoyl phosphate: step 1/3. Functionally, reversibly catalyzes the transfer of the carbamoyl group from carbamoyl phosphate (CP) to the N(epsilon) atom of ornithine (ORN) to produce L-citrulline. The polypeptide is Ornithine carbamoyltransferase (Renibacterium salmoninarum (strain ATCC 33209 / DSM 20767 / JCM 11484 / NBRC 15589 / NCIMB 2235)).